The primary structure comprises 315 residues: Apolipoprotein F (315 aa).

Positions 1-24 (MHSLRLILMSIQLLCYLLLCPVDA) are cleaved as a signal peptide. A propeptide spanning residues 25-154 (TSHGEATSVS…EQPGPKRAKR (130 aa)) is cleaved from the precursor.

The protein belongs to the apolipoprotein F family. Liver.

It is found in the secreted. Minor apolipoprotein that associates with LDL. Inhibits cholesteryl ester transfer protein (CETP) activity and appears to be an important regulator of cholesterol transport. Also associates to a lesser degree with VLDL, Apo-AI and Apo-AII. This chain is Apolipoprotein F (Apof), found in Mus musculus (Mouse).